The chain runs to 325 residues: MQNSLLKPRIIEVEVLGAGHAKVVMEPFERGYGHTLGNALRRVLLSSMVGYAPTEVTIAGVVHEYSSLDGVQEDVVDLLLNLKGVVFKLHNRDDVTLTLKKEGEGAVLASDIELPHDVELVNPDHVIAHLTAGGKLDMQIKVEKGRGYVPGNVRRLSEDTNKTIGRIILDASFSPVRRVSYAVESARVEQRTDLDKLVINIETNGVITPEEAIRQSARVLVDQLNVFAALEGTEAPADAPSRAPAVDPILLRPVDDLELTVRSANCLKAENIYYIGDLIQRSENELLKTPNLGRKSLNEIKEVLASRGLTLGMKLENWPPAGLEK.

The interval 1–231 is alpha N-terminal domain (alpha-NTD); that stretch reads MQNSLLKPRI…DQLNVFAALE (231 aa). The segment at 246 to 325 is alpha C-terminal domain (alpha-CTD); the sequence is VDPILLRPVD…ENWPPAGLEK (80 aa).

The protein belongs to the RNA polymerase alpha chain family. In terms of assembly, homodimer. The RNAP catalytic core consists of 2 alpha, 1 beta, 1 beta' and 1 omega subunit. When a sigma factor is associated with the core the holoenzyme is formed, which can initiate transcription.

The catalysed reaction is RNA(n) + a ribonucleoside 5'-triphosphate = RNA(n+1) + diphosphate. In terms of biological role, DNA-dependent RNA polymerase catalyzes the transcription of DNA into RNA using the four ribonucleoside triphosphates as substrates. The polypeptide is DNA-directed RNA polymerase subunit alpha (Herminiimonas arsenicoxydans).